A 95-amino-acid polypeptide reads, in one-letter code: Stationary phase-expressed protein 1 (95 aa).

A helical transmembrane segment spans residues 20-38 (FRYIMLGLVGAAVVPTAYM).

Its subcellular location is the mitochondrion membrane. This chain is Stationary phase-expressed protein 1 (SPG1), found in Saccharomyces cerevisiae (strain RM11-1a) (Baker's yeast).